The chain runs to 89 residues: Small ribosomal subunit protein uS15 (89 aa).

This sequence belongs to the universal ribosomal protein uS15 family. In terms of assembly, part of the 30S ribosomal subunit. Forms a bridge to the 50S subunit in the 70S ribosome, contacting the 23S rRNA.

One of the primary rRNA binding proteins, it binds directly to 16S rRNA where it helps nucleate assembly of the platform of the 30S subunit by binding and bridging several RNA helices of the 16S rRNA. In terms of biological role, forms an intersubunit bridge (bridge B4) with the 23S rRNA of the 50S subunit in the ribosome. The chain is Small ribosomal subunit protein uS15 from Methylococcus capsulatus (strain ATCC 33009 / NCIMB 11132 / Bath).